The sequence spans 103 residues: Large ribosomal subunit protein bL21 (103 aa).

Belongs to the bacterial ribosomal protein bL21 family. Part of the 50S ribosomal subunit. Contacts protein L20.

Its function is as follows. This protein binds to 23S rRNA in the presence of protein L20. The protein is Large ribosomal subunit protein bL21 of Alteromonas mediterranea (strain DSM 17117 / CIP 110805 / LMG 28347 / Deep ecotype).